A 365-amino-acid polypeptide reads, in one-letter code: GTPase Obg (365 aa).

Residues Met-1–Leu-159 enclose the Obg domain. The region spanning Ala-160 to Gln-334 is the OBG-type G domain. GTP-binding positions include Gly-166–Ser-173, Phe-191–His-195, Asp-213–Gly-216, Asn-284–Asp-287, and Ser-315–Leu-317. The Mg(2+) site is built by Ser-173 and Thr-193.

The protein belongs to the TRAFAC class OBG-HflX-like GTPase superfamily. OBG GTPase family. As to quaternary structure, monomer. Mg(2+) serves as cofactor.

The protein resides in the cytoplasm. In terms of biological role, an essential GTPase which binds GTP, GDP and possibly (p)ppGpp with moderate affinity, with high nucleotide exchange rates and a fairly low GTP hydrolysis rate. Plays a role in control of the cell cycle, stress response, ribosome biogenesis and in those bacteria that undergo differentiation, in morphogenesis control. The chain is GTPase Obg from Cupriavidus necator (strain ATCC 17699 / DSM 428 / KCTC 22496 / NCIMB 10442 / H16 / Stanier 337) (Ralstonia eutropha).